The primary structure comprises 337 residues: Glyceraldehyde-3-phosphate dehydrogenase (337 aa).

NAD(+) is bound by residues 12 to 13 (RI), Asp-34, and Arg-79. D-glyceraldehyde 3-phosphate-binding positions include 150-152 (SCT), Thr-181, 210-211 (TG), and Arg-233. Cys-151 functions as the Nucleophile in the catalytic mechanism. An NAD(+)-binding site is contributed by Asn-315.

Belongs to the glyceraldehyde-3-phosphate dehydrogenase family. In terms of assembly, homotetramer.

The protein resides in the cytoplasm. It catalyses the reaction D-glyceraldehyde 3-phosphate + phosphate + NAD(+) = (2R)-3-phospho-glyceroyl phosphate + NADH + H(+). It functions in the pathway carbohydrate degradation; glycolysis; pyruvate from D-glyceraldehyde 3-phosphate: step 1/5. The chain is Glyceraldehyde-3-phosphate dehydrogenase (GPD) from Ajellomyces capsulatus (Darling's disease fungus).